A 635-amino-acid chain; its full sequence is Sodium- and chloride-dependent transporter XTRP3B (635 aa).

Residues 1–38 (MESPSAHAVSLPEDEELQPWGGAGGPGQHPGRPRSTEC) form a disordered region. The Cytoplasmic portion of the chain corresponds to 1–56 (MESPSAHAVSLPEDEELQPWGGAGGPGQHPGRPRSTECAHPGVVEKVRPKWDNPLQ). Residues 57-77 (FLLVCISYAVGLGNVWRFPYL) traverse the membrane as a helical segment. Residues 78–85 (CQMYGGGN) lie on the Extracellular side of the membrane. Residues 86-106 (FLVPYIIMLIVEGMPLLYLEL) traverse the membrane as a helical segment. Residues 107–127 (AVGQRMRQGSIGAWRTISPYL) are Cytoplasmic-facing. The chain crosses the membrane as a helical span at residues 128-148 (SGVGIASLVVSFLASVYFNVI). Topologically, residues 149-208 (NTWALWYLFHSFQDPLPWSVCPLNSNHTGYDEECEKASSTQYFWYRKTLNISPSIQENGG) are extracellular. N-linked (GlcNAc...) asparagine glycosylation is present at asparagine 174. Residues 209-229 (VQWEPALCLTLAWLMVYLCIL) form a helical membrane-spanning segment. Residues 230 to 237 (RGTESTGK) are Cytoplasmic-facing. The chain crosses the membrane as a helical span at residues 238–258 (VVYFTTSLPYFVLIIYLVRGL). Residues 259–284 (TLHGATNGLAYMFTPKIEQLANPKAW) lie on the Extracellular side of the membrane. The helical transmembrane segment at 285–305 (INAATQIFFSLGLGCGGLIAF) threads the bilayer. Topologically, residues 306–319 (ASYNEPSNDCQKHA) are cytoplasmic. A helical membrane pass occupies residues 320-340 (LIVSVINSTTAIFSSIVTFSI). Over 341 to 432 (YGFKATFNYE…EAIKNMEVSQ (92 aa)) the chain is Extracellular. Asparagine 400 carries an N-linked (GlcNAc...) asparagine glycan. Residues 433-453 (LWSVLYFFMLLTLGMGSMVGT) form a helical membrane-spanning segment. Residues 454–474 (GTAILTPLTDSKIISSYLPKE) are Cytoplasmic-facing. Residues 475–495 (AISGLVCLLNCAIGMVFTMEA) traverse the membrane as a helical segment. Topologically, residues 496–508 (GNYWFDLFNDYTA) are extracellular. Residues 509–529 (TLSLLLIVLVETIAVCYVYGL) form a helical membrane-spanning segment. The Cytoplasmic portion of the chain corresponds to 530–547 (KRFESDLRAMTGRTLSWY). Residues 548–568 (WKVMWAFVSPLLIVGLFIFYL) form a helical membrane-spanning segment. Over 569-597 (SDYILTGTLQYQAWDATQGHVVTKDYPTY) the chain is Extracellular. The helical transmembrane segment at 598 to 618 (ALAVIGLLVASSTMCIPLVAL) threads the bilayer. Residues 619–635 (GTFVTRHFKIREQFSAA) lie on the Cytoplasmic side of the membrane.

It belongs to the sodium:neurotransmitter symporter (SNF) (TC 2.A.22) family. SLC6A20 subfamily. In terms of assembly, interacts with CLTRN. In terms of tissue distribution, detected only in kidney and lung.

The protein resides in the apical cell membrane. Its function is as follows. Does not show transporter activity with a range of tested amino acids including proline, glutamine, glutamic acid, leucine, alanine, histidine, glycine and arginine. The protein is Sodium- and chloride-dependent transporter XTRP3B (Slc6a20b) of Mus musculus (Mouse).